The following is a 687-amino-acid chain: uncharacterized protein (687 aa).

A run of 14 helical transmembrane segments spans residues 28-48 (IIFT…TIVV), 66-86 (WAVT…GKLG), 94-114 (VLLG…LSQT), 126-146 (GVGA…VVPL), 154-174 (GVLG…GGWL), 182-202 (WAFW…ATAV), 211-231 (PVID…LIMA), 243-263 (SATI…FVWL), 287-307 (VLSF…PIYL), 320-340 (LRTL…GVLV), 348-368 (IFPV…SQMD), 378-398 (LYLV…VLIV), 414-434 (VTFF…ALFV), and 480-500 (LTQV…LALL).

This sequence belongs to the major facilitator superfamily. TCR/Tet family.

The protein resides in the cell membrane. This is an uncharacterized protein from Mycobacterium tuberculosis (strain CDC 1551 / Oshkosh).